A 72-amino-acid chain; its full sequence is Neuropeptide IMFamide (72 aa).

A signal peptide spans 1–24 (MMRFTIGVVCLVAVLLSLAEVSEA). F36 is subject to Phenylalanine amide. The propeptide occupies 40–72 (GPTEYDQRGKTFTALCEIATEACQAWFPSTENK).

As to expression, expressed in corpora cardiaca (CC), corpora allata (CA), antennal lobe (AL) and gnathal ganglion (GNG) (at protein level). Expression detected in only a few animals (at protein level).

It localises to the secreted. This is Neuropeptide IMFamide from Agrotis ipsilon (Black cutworm moth).